We begin with the raw amino-acid sequence, 123 residues long: Ribonuclease P protein component (123 aa).

It belongs to the RnpA family. In terms of assembly, consists of a catalytic RNA component (M1 or rnpB) and a protein subunit.

The enzyme catalyses Endonucleolytic cleavage of RNA, removing 5'-extranucleotides from tRNA precursor.. In terms of biological role, RNaseP catalyzes the removal of the 5'-leader sequence from pre-tRNA to produce the mature 5'-terminus. It can also cleave other RNA substrates such as 4.5S RNA. The protein component plays an auxiliary but essential role in vivo by binding to the 5'-leader sequence and broadening the substrate specificity of the ribozyme. This Streptomyces griseus subsp. griseus (strain JCM 4626 / CBS 651.72 / NBRC 13350 / KCC S-0626 / ISP 5235) protein is Ribonuclease P protein component.